We begin with the raw amino-acid sequence, 78 residues long: MSRVCQVTGKRPAVGNNRSHARNATKRRFLPNLQTHRFWVESEKRFVKLRLTAKGMRIIDKKGIDVVLADMRARGENV.

A disordered region spans residues 1–25; it reads MSRVCQVTGKRPAVGNNRSHARNAT.

Belongs to the bacterial ribosomal protein bL28 family.

This is Large ribosomal subunit protein bL28 from Vibrio vulnificus (strain CMCP6).